A 330-amino-acid polypeptide reads, in one-letter code: Transcriptional regulatory protein PHO23 (330 aa).

The interval 139 to 272 is disordered; it reads EKIESKSNSK…NSNNSRISRP (134 aa). A compositionally biased stretch (polar residues) spans 231 to 254; it reads TAVSPSTISTATAVNNGRIGTSTA. The span at 255–269 shows a compositional bias: low complexity; it reads SRGVSSVGNSNNSRI. The PHD-type zinc finger occupies 280 to 329; that stretch reads PLYCYCNQVAYGEMVGCDGADCELEWFHLPCIGLETLPKGKWYCDDCKKK. The Zn(2+) site is built by Cys-283, Cys-285, Cys-296, Cys-301, His-307, Cys-310, Cys-323, and Cys-326.

The protein belongs to the ING family. Interacts with H3K4me3 and to a lesser extent with H3K4me2. Component of the RPD3C(L) complex composed of at least ASH1, CTI6, DEP1, PHO23, RPD3, RXT2, RXT3, SAP30, SDS3, SIN3, UME1 and UME6.

It is found in the nucleus. In terms of biological role, component of the RPD3C(L) histone deacetylase complex (HDAC) responsible for the deacetylation of lysine residues on the N-terminal part of the core histones (H2A, H2B, H3 and H4). Histone deacetylation gives a tag for epigenetic repression and plays an important role in transcriptional regulation, cell cycle progression and developmental events. In Saccharomyces cerevisiae (strain ATCC 204508 / S288c) (Baker's yeast), this protein is Transcriptional regulatory protein PHO23 (PHO23).